The following is a 236-amino-acid chain: Growth-regulating factor 12 (236 aa).

The tract at residues 1-27 is disordered; the sequence is MLAEGRQVYLPPPPPSKLPRLSGTDPT. The 36-residue stretch at 74–109 folds into the QLQ domain; sequence ALTFMQRQELEQQVLIYRYFAAGAPVPVHLVLPIWK. The WRC domain occupies 140–184; that stretch reads EPEPGRCRRTDGKKWRCSRDVVPGHKYCERHVHRGRGRSRKPMEA. 2 short sequence motifs (bipartite nuclear localization signal) span residues 145–155 and 173–180; these read RCRRTDGKKWR and RGRGRSRK.

This sequence belongs to the GRF family.

Its subcellular location is the nucleus. In terms of biological role, transcription activator that plays a regulatory role in gibberellin-induced stem elongation. This is Growth-regulating factor 12 (GRF12) from Oryza sativa subsp. japonica (Rice).